Reading from the N-terminus, the 964-residue chain is SKI family transcriptional corepressor 1 (964 aa).

Disordered regions lie at residues 45–72 (TQLG…SSAL), 278–365 (RTFS…GGSA), 414–461 (AGEP…WGHQ), 525–587 (AGGG…RKSS), 610–768 (REAY…GAAK), and 794–842 (LCTP…EDGL). Over residues 283–310 (QGGGGGGANSGSGGAGKGGAGGGGGPGC) the composition is skewed to gly residues. Residues 345–355 (ALGLAAAASGP) are compositionally biased toward low complexity. Composition is skewed to gly residues over residues 356–365 (AGPGGPGGSA) and 417–440 (PKGG…GPGA). Residues 571–583 (SLGPLPPPPPPPA) are compositionally biased toward pro residues. Positions 652-661 (DTADEPEVDV) are enriched in acidic residues. The segment covering 798 to 808 (ETHEPDKEDNH) has biased composition (basic and acidic residues). The span at 823 to 834 (DQRSVSQPSPAN) shows a compositional bias: polar residues. Residues 853 to 921 (EKDIENLARE…DTLCNELDQE (69 aa)) adopt a coiled-coil conformation.

Belongs to the SKI family. Interacts with SMAD1, SMAD2 and SMAD3. Interacts with LBX1. In terms of tissue distribution, expressed in brain with higher levels in embryo than adult. Expressed by migratory precursors of Purkinje cells in the postnatal brain. Also expressed in adult testis.

Its subcellular location is the nucleus. Inhibits BMP signaling. Acts as a transcriptional corepressor of LBX1. The protein is SKI family transcriptional corepressor 1 (Skor1) of Mus musculus (Mouse).